A 213-amino-acid chain; its full sequence is Adenylate kinase (213 aa).

Residue 10–15 (GSGKGT) participates in ATP binding. The NMP stretch occupies residues 30-59 (STGDMLRTTVNKESVLGKNIQAIIKLGNLV). AMP contacts are provided by residues Thr-31, Arg-36, 57-59 (NLV), 85-88 (GFPR), and Gln-92. An LID region spans residues 122 to 159 (GRMVHEPSGRIYHVTFNPPKQKGKDDITGENLIIRQDD). Residues Arg-123 and 132-133 (IY) each bind ATP. Positions 156 and 167 each coordinate AMP. Cys-199 contributes to the ATP binding site.

Belongs to the adenylate kinase family. As to quaternary structure, monomer.

The protein resides in the cytoplasm. It carries out the reaction AMP + ATP = 2 ADP. It participates in purine metabolism; AMP biosynthesis via salvage pathway; AMP from ADP: step 1/1. Functionally, catalyzes the reversible transfer of the terminal phosphate group between ATP and AMP. Plays an important role in cellular energy homeostasis and in adenine nucleotide metabolism. In Baumannia cicadellinicola subsp. Homalodisca coagulata, this protein is Adenylate kinase.